We begin with the raw amino-acid sequence, 148 residues long: MRRMDKVDLQLIKILSQNSRLTYRELAEMLGTTRQRVARKVDKLKKLGIIRKFTIIPNLEKLNYMYAILLIKVKATENIYQVAKVLKDHEDVKILELGVGKYNIIAHVLVPKDIKKAQEKVNDVIKEINGIEDLEVEFVSDIPKFELL.

In terms of domain architecture, HTH asnC-type spans 4–65 (MDKVDLQLIK…IPNLEKLNYM (62 aa)). Residues 23-42 (YRELAEMLGTTRQRVARKVD) constitute a DNA-binding region (H-T-H motif).

This is an uncharacterized protein from Pyrococcus furiosus (strain ATCC 43587 / DSM 3638 / JCM 8422 / Vc1).